The chain runs to 428 residues: Phosphomethylpyrimidine synthase 2 (428 aa).

Substrate is bound by residues Asn65, Met94, Tyr123, His158, 180–182 (SRG), 221–224 (DGMR), and Glu260. A Zn(2+)-binding site is contributed by His264. Tyr287 is a binding site for substrate. His328 is a Zn(2+) binding site. The [4Fe-4S] cluster site is built by Cys405, Cys408, and Cys412.

This sequence belongs to the ThiC family. Requires [4Fe-4S] cluster as cofactor.

It catalyses the reaction 5-amino-1-(5-phospho-beta-D-ribosyl)imidazole + S-adenosyl-L-methionine = 4-amino-2-methyl-5-(phosphooxymethyl)pyrimidine + CO + 5'-deoxyadenosine + formate + L-methionine + 3 H(+). Its pathway is cofactor biosynthesis; thiamine diphosphate biosynthesis. Catalyzes the synthesis of the hydroxymethylpyrimidine phosphate (HMP-P) moiety of thiamine from aminoimidazole ribotide (AIR) in a radical S-adenosyl-L-methionine (SAM)-dependent reaction. In Methanosarcina barkeri (strain Fusaro / DSM 804), this protein is Phosphomethylpyrimidine synthase 2.